Consider the following 4486-residue polypeptide: MRLAEERAALAAENADGEPGADRRLRLLGTYVAMSLRPAAGAWERCAGSAEAEQLLQAFLGRDAAEGPRPLLVVRPGPRGLAIRPGLEVGPESGLAGAKALFFLRTGPEPPGPDSFRGAVVCGDLPAAPLEHLAALFSEVVLPVLANEKNRLNWPHMICEDVRRHAHSLQCDLSVILEQVKGKTLLPLPAGSEKMEFADSKSETVLDSIDKSVIYAIESAVIKWSYQVQVVLKRESSQPLLQGENPTPKVELEFWKSRYEDLKYIYNQLRTITVRGMAKLLDKLQSSYFPAFKAMYRDVVAALAEAQDIHVHLIPLQRHLEALENAEFPEVKPQLRPLLHVVCLIWATCKSYRSPGRLTVLLQEICNLLIQQASNYLSPEDLLRSEVEESQRKLQVVSDTLSFFKQEFQDRRENLHTYFKENQEVKEWDFQSSLVFVRLDGFLGQLHVVEGLLKTALDFHKLGKVEFSGVRGNALSQQVQQMHEEFQEMYRLLSGSSSDCLYLQSTDFENDVSEFNQKVEDLDRRLGTIFIQAFDDAPGLEHAFKLLDIAGNLLERPLVARDTSDKYLVLIQMFNKDLDAVRMIYSQHVQEEAELGFSPVHKNMPTVAGGLRWAQELRQRIQGPFSNFGRITHPCMESAEGKRMQQKYEDMLSLLEKYETRLYEDWCRTVSEKSQYNLSQPLLKRDPETKEITINFNPQLISVLKEMSYLEPREMKHMPETAAAMFSSRDFYRQLVANLELMANWYNKVMKTLLEVEFPLVEEELQNIDLRLRAAEETLNWKTEGICDYVTEITSSIHDLEQRIQKTKDNVEEIQNIMKTWVTPIFKTKDGKRESLLSLDDRHDRMEKYYNLIKESGLKIHALVQENLGLFSADPTSNIWKTYVNSIDNLLLNGFFLAIECSLKYLLENTECKAGLTPIFEAQLSLAIPELVFYPSLESGVKGGFCDIVEGLITSIFRIPSLVPRLSPQNGSPHYQVDLDGIPDLANMRRTLMERVQRMMGLCCGYQSTFSQYSYLYVEDRKEVLGQFLLYGHILTPEEIEDHVEDGIPENPPLLSQFKVQIDSYETLYEEVCRLEPIKVFDGWMKIDIRPFKASLLNIIKRWSLLFKQHLVDHVTHSLANLDAFIKKSESGLLKKVEKGDFQGLVEIMGHLMAVKERQSNTDEMFEPLKQTIELLKTYEQELPETVFKQLEELPEKWNNIKKVAITVKQQVAPLQANEVTLLRQRCTAFDAEQQQFWEQFHKEAPFRFDSIHPHQMLDARHIEIQQMESTMASISESASLFEVNVPDYKQLRQCRKEVCQLKELWDTIGMVTSSIHAWETTPWRNINVEAMELECKQFARHIRNLDKEVRAWDAFTGLESTVWNTLSSLRAVAELQNPAIRERHWRQLMQATGVSFTMDQDTTLAHLLQLQLHHYEDEVRGIVDKAAKEMGMEKTLKELQTTWAGMEFQYEPHPRTNVPLLCSDEDLIEVLEDNQVQLQNLVMSKYVAFFLEEVSGWQKKLSTVDAVISIWFEVQRTWTHLESIFTGSEDIRAQLPQDSKRFEGIDIDFKELAYDAQKIPNVVQTTNKPGLYEKLEDIQGRLCLCEKALAEYLDTKRLAFPRFYFLSSSDLLDILSNGTAPQQVQRHLSKLFDNMAKMRFQLDASGEPTKTSLGMYSKEEEYVAFSEPCDCSGQVEIWLNHVLGHMKATVRHEMTEGVTAYEEKPREQWLFDHPAQVALTCTQIWWTTEVGMAFARLEEGYESAMKDYYKKQVAQLKTLITMLIGQLSKGDRQKIMTICTIDVHARDVVAKMIAQKVDNAQAFLWLSQLRHRWDDEVKHCFANICDAQFLYSYEYLGNTPRLVITPLTDRCYITLTQSLHLTMSGAPAGPAGTGKTETTKDLGRALGILVYVFNCSEQMDYKSCGNIYKGLAQTGAWGCFDEFNRISVEVLSVVAVQVKSIQDAIRDKKQWFSFLGEEISLNPSVGIFITMNPGYAGRTELPENLKSLFRPCAMVVPDFELICEIMLVAEGFIEAQSLARKFITLYQLCKELLSKQDHYDWGLRAIKSVLVVAGSLKRGDPDRPEDQVLMRSLRDFNIPKIVTDDMPIFMGLIGDLFPALDVPRRRDPNFEALVRKAIVDLKLQAEDNFVLKVVQLEELLAVRHSVFVVGGAGTGKSQVLRSLHKTYQIMKRRPVWTDLNPKAVTNDELFGIINPATGEWKDGLFSSIMRELANITHDGPKWILLDGDIDPMWIESLNTVMDDNKVLTLASNERIPLNPTMKLLFEISHLRTATPATVSRAGILYINPADLGWNPPVSSWIEKREIQTERANLTILFDKYLPTCLDTLRTRFKKIIPIPEQSMVQMVCHLLECLLTTEDIPADCPKEIYEHYFVFAAIWAFGGAMVQDQLVDYRAEFSKWWLTEFKTVKFPSQGTIFDYYIDPETKKFEPWSKLVPQFEFDPEMPLQACLVHTSETIRVCYFMERLMARQRPVMLVGTAGTGKSVLVGAKLASLDPEAYLVKNVPFNYYTTSAMLQAVLEKPLEKKAGRNYGPPGNKKLIYFIDDMNMPEVDAYGTVQPHTIIRQHLDYGHWYDRSKLSLKEITNVQYVSCMNPTAGSFTINPRLQRHFSVFVLSFPGADALSSIYSIILTQHLKLGNFPASLQKSIPPLIDLALAFHQKIATTFLPTGIKFHYIFNLRDFANIFQGILFSSVECVKSTWDLIRLYLHESNRVYRDKMVEEKDFDLFDKIQTEVLKKTFDDIEDPVEQTQSPNLYCHFANGIGEPKYMPVQSWELLTQTLVEALENHNEVNTVMDLVLFEDAMRHVCHINRILESPRGNALLVGVGGSGKQSLTRLAAFISSMDVFQITLRKGYQIQDFKMDLASLCLKAGVKNLNTVFLMTDAQVADERFLVLINDLLASGEIPDLYSDDEVENIISNVRNEVKSQGLVDNRENCWKFFIDRIRRQLKVTLCFSPVGNKLRVRSRKFPAIVNCTAIHWFHEWPQQALESVSLRFLQNTEGIEPTVKQSISKFMAFVHTSVNQTSQSYLSNEQRYNYTTPKSFLEFIRLYQSLLHRHRKELKCKTERLENGLLKLHSTSAQVDDLKAKLAAQEVELKQKNEDADKLIQVVGVETDKVSREKAMADEEEQKVAVIMLEVKQKQKDCEEDLAKAEPALTAAQAALNTLNKTNLTELKSFGSPPLAVSNVSAAVMVLMAPRGRVPKDRSWKAAKVTMAKVDGFLDSLINFNKENIHENCLKAIRPYLQDPEFNPEFVATKSYAAAGLCSWVINIVRFYEVFCDVEPKRQALNKATADLTAAQEKLAAIKAKIAHLNENLAKLTARFEKATADKLKCQQEAEVTAVTISLANRLVGGLASENVRWADAVQNFKQQERTLCGDILLITAFISYLGFFTKKYRQSLLDRTWRPYLSQLKTPIPVTPALDPLRMLMDDADVAAWQNEGLPADRMSVENATILINCERWPLMVDPQLQGIKWIKNKYGEDLRVTQIGQKGYLQIIEQALEAGAVVLIENLEESIDPVLGPLLGREVIKKGRFIKIGDKECEYNPKFRLILHTKLANPHYQPELQAQATLINFTVTRDGLEDQLLAAVVSMERPDLEQLKSDLTKQQNGFKITLKTLEDSLLSRLSSASGNFLGETVLVENLEITKQTAAEVEKKVQEAKVTEVKINEAREHYRPAAARASLLYFIMNDLSKIHPMYQFSLKAFSIVFQKAVERAAPDESLRERVANLIDSITFSVYQYTIRGLFECDKLTYLAQLTFQILLMNREVNAVELDFLLRSPVQTGTASPVEFLSHQAWGAVKVLSSMEEFSNLDRDIEGSAKSWKKFVESECPEKEKLPQEWKNKTALQRLCMLRAMRPDRMTYALRDFVEEKLGSKYVVGRALDFATSFEESGPATPMFFILSPGVDPLKDVESQGRKLGYTFNNQNFHNVSLGQGQEVVAEAALDLAAKKGHWVILQNIHLVAKWLSTLEKKLEEHSENSHPEFRVFMSAEPAPSPEGHIIPQGILENSIKITNEPPTGMHANLHKALDNFTQDTLEMCSRETEFKSILFALCYFHAVVAERRKFGPQGWNRSYPFNTGDLTISVNVLYNFLEANAKVPYDDLRYLFGEIMYGGHITDDWDRRLCRTYLGEFIRPEMLEGELSLAPGFPLPGNMDYNGYHQYIDAELPPESPYLYGLHPNAEIGFLTQTSEKLFRTVLELQPRDSQARDGAGATREEKVKALLEEILERVTDEFNIPELMAKVEERTPYIVVAFQECGRMNILTREIQRSLRELELGLKGELTMTSHMENLQNALYFDMVPESWARRAYPSTAGLAAWFPDLLNRIKELEAWTGDFTMPSTVWLTGFFNPQSFLTAIMQSTARKNEWPLDQMALQCDMTKKNREEFRSPPREGAYIHGLFMEGACWDTQAGIITEAKLKDLTPPMPVMFIKAIPADKQDCRSVYSCPVYKTSQRGPTYVWTFNLKTKENPSKWVLAGVALLLQI.

Residues 1–1831 are stem; sequence MRLAEERAAL…FANICDAQFL (1831 aa). Coiled-coil stretches lie at residues 381–410, 504–529, 639–662, 752–823, and 1326–1355; these read DLLR…EFQD, QSTD…LGTI, AEGK…ETRL, TLLE…TWVT, and NINV…AWDA. AAA stretches follow at residues 1832–2053, 2113–2334, 2440–2688, and 2787–3036; these read YSYE…VLVV, ALVR…TRFK, EFDP…IFQG, and NHNE…EQRY. ATP is bound by residues 1870-1877, 2151-2158, 2478-2485, and 2825-2832; these read GPAGTGKT, GGAGTGKS, GTAGTGKS, and GVGGSGKQ. 3 coiled-coil regions span residues 3051 to 3154, 3285 to 3341, and 3640 to 3675; these read YQSL…AKAE, KRQA…AEVT, and LVEN…REHY. The segment at 3051 to 3341 is stalk; the sequence is YQSLLHRHRK…LKCQQEAEVT (291 aa). AAA stretches follow at residues 3429 to 3656 and 3866 to 4092; these read LMDD…EVEK and LRDF…VLYN.

The protein belongs to the dynein heavy chain family. As to quaternary structure, consists of at least two heavy chains and a number of intermediate and light chains. Interacts with ODAD1. Expressed in upper and lower respiratory airway epithelia (at protein level). Not detected in spermatozoa (at protein level).

Its subcellular location is the cytoplasm. It localises to the cytoskeleton. The protein localises to the cilium axoneme. Force generating protein required for cilia beating in respiratory epithelia. Produces force towards the minus ends of microtubules. Dynein has ATPase activity; the force-producing power stroke is thought to occur on release of ADP. The sequence is that of Dynein axonemal heavy chain 9 from Homo sapiens (Human).